Consider the following 185-residue polypeptide: Elongation factor P (185 aa).

The protein belongs to the elongation factor P family.

It is found in the cytoplasm. The protein operates within protein biosynthesis; polypeptide chain elongation. In terms of biological role, involved in peptide bond synthesis. Stimulates efficient translation and peptide-bond synthesis on native or reconstituted 70S ribosomes in vitro. Probably functions indirectly by altering the affinity of the ribosome for aminoacyl-tRNA, thus increasing their reactivity as acceptors for peptidyl transferase. The sequence is that of Elongation factor P from Streptococcus equi subsp. zooepidemicus (strain MGCS10565).